Consider the following 243-residue polypeptide: Ribonuclease 3 (243 aa).

In terms of domain architecture, RNase III spans 10–146; it reads INRFRKRFDT…FIGALYLDQG (137 aa). Residue E59 participates in Mg(2+) binding. D63 is a catalytic residue. D132 and E135 together coordinate Mg(2+). Residue E135 is part of the active site. The 70-residue stretch at 172–241 folds into the DRBM domain; sequence DFKTQFQEYV…AESAYKQLKQ (70 aa). Basic and acidic residues predominate over residues 219-231; that stretch reads GKGKTKKESEQRA. A disordered region spans residues 219–243; that stretch reads GKGKTKKESEQRAAESAYKQLKQIK.

It belongs to the ribonuclease III family. In terms of assembly, homodimer. Mg(2+) is required as a cofactor.

The protein localises to the cytoplasm. It carries out the reaction Endonucleolytic cleavage to 5'-phosphomonoester.. Digests double-stranded RNA. Involved in the processing of primary rRNA transcript to yield the immediate precursors to the large and small rRNAs (23S and 16S). Processes some mRNAs, and tRNAs when they are encoded in the rRNA operon. Processes pre-crRNA and tracrRNA of type II CRISPR loci if present in the organism. The chain is Ribonuclease 3 from Staphylococcus aureus (strain bovine RF122 / ET3-1).